A 180-amino-acid chain; its full sequence is Large ribosomal subunit protein uL18m (180 aa).

Belongs to the universal ribosomal protein uL18 family. Component of the mitochondrial large ribosomal subunit (mt-LSU). Mature mammalian 55S mitochondrial ribosomes consist of a small (28S) and a large (39S) subunit. The 28S small subunit contains a 12S ribosomal RNA (12S mt-rRNA) and 30 different proteins. The 39S large subunit contains a 16S rRNA (16S mt-rRNA), a copy of mitochondrial valine transfer RNA (mt-tRNA(Val)), which plays an integral structural role, and 52 different proteins.

It localises to the mitochondrion. Functionally, together with thiosulfate sulfurtransferase (TST), acts as a mitochondrial import factor for the cytosolic 5S rRNA. The precursor form shows RNA chaperone activity; is able to fold the 5S rRNA into an import-competent conformation that is recognized by rhodanese (TST). Both the cytoplasmic and mitochondrial forms are able to bind to the helix IV-loop D in the gamma domain of the 5S rRNA. The polypeptide is Large ribosomal subunit protein uL18m (MRPL18) (Homo sapiens (Human)).